The chain runs to 878 residues: Coatomer subunit gamma (878 aa).

HEAT repeat units lie at residues 64 to 101, 287 to 324, 326 to 359, 360 to 396, 399 to 434, and 471 to 508; these read REAT…VAED, RMLS…THPA, VTTC…GAES, SVER…KYPR, TVLM…ENAD, and ATPS…SCPA.

It belongs to the COPG family. In terms of assembly, oligomeric complex that consists of at least the alpha, beta, beta', gamma, delta, epsilon and zeta subunits.

The protein localises to the cytoplasm. It is found in the golgi apparatus membrane. It localises to the cytoplasmic vesicle. The protein resides in the COPI-coated vesicle membrane. Its subcellular location is the endoplasmic reticulum. Its function is as follows. The coatomer is a cytosolic protein complex that binds to dilysine motifs and reversibly associates with Golgi non-clathrin-coated vesicles, which further mediate biosynthetic protein transport from the ER, via the Golgi up to the trans Golgi network. Coatomer complex is required for budding from Golgi membranes, and is essential for the retrograde Golgi-to-ER transport of dilysine-tagged proteins. Required for limiting lipid storage in lipid droplets. Involved in the expansion of luminal extracellular matrices and apical membrane during tubulogenesis. Required in the tracheal epithelium for luminal protein secretion and diametric tube growth. In salivary glands, required for deposition of O-glycans and luminal extracellular matrix assembly. Required for epidermal morphogenesis and cuticle development. The polypeptide is Coatomer subunit gamma (Drosophila pseudoobscura pseudoobscura (Fruit fly)).